Reading from the N-terminus, the 450-residue chain is Oxygen-independent coproporphyrinogen III oxidase (450 aa).

A Radical SAM core domain is found at 45 to 282; the sequence is IPAGGSISLY…RTLILWDGYQ (238 aa). Residue Y54 coordinates S-adenosyl-L-methionine. Residues C60 and C64 each contribute to the [4Fe-4S] cluster site. F66 is a binding site for S-adenosyl-L-methionine. C67 lines the [4Fe-4S] cluster pocket. S-adenosyl-L-methionine-binding positions include G111, 112-113, E144, Q171, R183, D208, A242, and I328; that span reads GT.

The protein belongs to the anaerobic coproporphyrinogen-III oxidase family. As to quaternary structure, monomer. The cofactor is [4Fe-4S] cluster.

The protein resides in the cytoplasm. The catalysed reaction is coproporphyrinogen III + 2 S-adenosyl-L-methionine = protoporphyrinogen IX + 2 5'-deoxyadenosine + 2 L-methionine + 2 CO2. It participates in porphyrin-containing compound metabolism; protoporphyrin-IX biosynthesis; protoporphyrinogen-IX from coproporphyrinogen-III (AdoMet route): step 1/1. Involved in the heme and chlorophyll biosynthesis. Catalyzes the anaerobic oxidative decarboxylation of propionate groups of rings A and B of coproporphyrinogen III to yield the vinyl groups in protoporphyrinogen IX. This Cereibacter sphaeroides (strain ATCC 17023 / DSM 158 / JCM 6121 / CCUG 31486 / LMG 2827 / NBRC 12203 / NCIMB 8253 / ATH 2.4.1.) (Rhodobacter sphaeroides) protein is Oxygen-independent coproporphyrinogen III oxidase (hemZ).